The following is a 382-amino-acid chain: Exostosin-1 homolog (382 aa).

Residues 1-20 form the signal peptide; the sequence is MQNVMKFHLVIFMLFGSVRL. Asn268 carries an N-linked (GlcNAc...) asparagine glycan.

It belongs to the glycosyltransferase 47 family. Interacts with rib-2.

It localises to the endoplasmic reticulum. The protein resides in the golgi apparatus. Its function is as follows. Required for the biosynthesis of heparan sulfate by positively regulating N-acetylglucosamine transferase II (GlcNAcT-II) and glucuronyl transferase II (GlcAT-II) activities of glycosyltransferase rib-2. Probably not directly involved in chondroitin sulfate biosynthesis but negatively regulates chondroitin sulfate levels. Maternally required for normal ventral epidermal enclosure and for embryo elongation during the early stages of embryonic development. In addition, involved in the elongation of the pharyngeal isthmus and in the organization of the actin cytoskeleton in the pharyngeal muscles during the later stages embryonic development. In adults, regulates egg-laying and the normal morphogenesis of the vulva. Also involved in the directed migration of hermaphrodite-specific neurons. The chain is Exostosin-1 homolog (rib-1) from Caenorhabditis elegans.